Consider the following 463-residue polypeptide: Fibrinogen beta chain (463 aa).

Positions 1–12 (ASVEYDNEEDSP) are enriched in acidic residues. Residues 1 to 56 (ASVEYDNEEDSPQIDARAHRPLDKRQEAAPTLRPVAPPISGTGYQPRPPKQDKQAM) are disordered. Residue Tyr-5 is modified to Sulfotyrosine. Over residues 16–27 (ARAHRPLDKRQE) the composition is skewed to basic and acidic residues. Intrachain disulfides connect Cys-205/Cys-289 and Cys-215/Cys-244. The 256-residue stretch at 206 to 461 (NIPVVSGREC…KMSMKIKPYF (256 aa)) folds into the Fibrinogen C-terminal domain. A glycan (N-linked (GlcNAc...) asparagine) is linked at Asn-367. Residues Asp-384, Asp-386, and Trp-388 each contribute to the Ca(2+) site. Cys-397 and Cys-410 are oxidised to a cystine.

As to quaternary structure, heterohexamer; disulfide linked. Contains 2 sets of 3 non-identical chains (alpha, beta and gamma). The 2 heterotrimers are in head to head conformation with the N-termini in a small central domain. In terms of processing, conversion of fibrinogen to fibrin is triggered by thrombin, which cleaves fibrinopeptides A and B from alpha and beta chains, and thus exposes the N-terminal polymerization sites responsible for the formation of the soft clot. The soft clot is converted into the hard clot by factor XIIIA which catalyzes the epsilon-(gamma-glutamyl)lysine cross-linking between gamma chains (stronger) and between alpha chains (weaker) of different monomers.

It localises to the secreted. In terms of biological role, cleaved by the protease thrombin to yield monomers which, together with fibrinogen alpha (FGA) and fibrinogen gamma (FGG), polymerize to form an insoluble fibrin matrix. Fibrin has a major function in hemostasis as one of the primary components of blood clots. The chain is Fibrinogen beta chain (FGB) from Gallus gallus (Chicken).